The chain runs to 407 residues: Endo-1,4-beta-xylanase D (407 aa).

The N-terminal stretch at 1–19 (MTLVKSILLALAAGHVAQA) is a signal peptide. The region spanning 20–333 (QLNTAAKAAG…KPAYYGILAG (314 aa)) is the GH10 domain. N-linked (GlcNAc...) asparagine glycosylation is present at N118. The active-site Proton donor is the E148. E255 functions as the Nucleophile in the catalytic mechanism. A disulfide bond links C283 and C289. A disordered region spans residues 337-364 (GSGSSSSTSSTTLITTTTPTASSSTTSA). One can recognise a CBM1 domain in the interval 371-407 (SGAAHWGQCGGIGWSGPTICVSPYTCQVLNPYYSQCL).

It belongs to the glycosyl hydrolase 10 (cellulase F) family.

The protein localises to the secreted. The enzyme catalyses Endohydrolysis of (1-&gt;4)-beta-D-xylosidic linkages in xylans.. It participates in glycan degradation; xylan degradation. With respect to regulation, inhibited by wheat xylanase inhibiting protein I (XIP-I). In terms of biological role, endo-1,4-beta-xylanase involved in the hydrolysis of xylan, a major structural heterogeneous polysaccharide found in plant biomass representing the second most abundant polysaccharide in the biosphere, after cellulose. Shows an endo-mode of action on xylan forming mainly xylobiose and short-chain xylooligosaccharides (XOS). The protein is Endo-1,4-beta-xylanase D (xynD) of Talaromyces funiculosus (Fruitlet core rot fungus).